Here is a 123-residue protein sequence, read N- to C-terminus: S-adenosylmethionine decarboxylase proenzyme 2 (123 aa).

Catalysis depends on S65, which acts as the Schiff-base intermediate with substrate; via pyruvic acid. A Pyruvic acid (Ser); by autocatalysis modification is found at S65. The active-site Proton acceptor; for processing activity is the H70. The active-site Proton donor; for catalytic activity is C85.

The protein belongs to the prokaryotic AdoMetDC family. Type 1 subfamily. Heterotetramer of two alpha and two beta chains arranged as a dimer of alpha/beta heterodimers. Pyruvate serves as cofactor. Is synthesized initially as an inactive proenzyme. Formation of the active enzyme involves a self-maturation process in which the active site pyruvoyl group is generated from an internal serine residue via an autocatalytic post-translational modification. Two non-identical subunits are generated from the proenzyme in this reaction, and the pyruvate is formed at the N-terminus of the alpha chain, which is derived from the carboxyl end of the proenzyme. The post-translation cleavage follows an unusual pathway, termed non-hydrolytic serinolysis, in which the side chain hydroxyl group of the serine supplies its oxygen atom to form the C-terminus of the beta chain, while the remainder of the serine residue undergoes an oxidative deamination to produce ammonia and the pyruvoyl group blocking the N-terminus of the alpha chain.

It carries out the reaction S-adenosyl-L-methionine + H(+) = S-adenosyl 3-(methylsulfanyl)propylamine + CO2. It functions in the pathway amine and polyamine biosynthesis; S-adenosylmethioninamine biosynthesis; S-adenosylmethioninamine from S-adenosyl-L-methionine: step 1/1. Its function is as follows. Catalyzes the decarboxylation of S-adenosylmethionine to S-adenosylmethioninamine (dcAdoMet), the propylamine donor required for the synthesis of the polyamines spermine and spermidine from the diamine putrescine. In Bacillus cereus (strain ZK / E33L), this protein is S-adenosylmethionine decarboxylase proenzyme 2.